The primary structure comprises 97 residues: Co-chaperonin GroES (97 aa).

It belongs to the GroES chaperonin family. In terms of assembly, heptamer of 7 subunits arranged in a ring. Interacts with the chaperonin GroEL.

It localises to the cytoplasm. Its function is as follows. Together with the chaperonin GroEL, plays an essential role in assisting protein folding. The GroEL-GroES system forms a nano-cage that allows encapsulation of the non-native substrate proteins and provides a physical environment optimized to promote and accelerate protein folding. GroES binds to the apical surface of the GroEL ring, thereby capping the opening of the GroEL channel. The chain is Co-chaperonin GroES from Pseudomonas savastanoi pv. phaseolicola (strain 1448A / Race 6) (Pseudomonas syringae pv. phaseolicola (strain 1448A / Race 6)).